The following is a 181-amino-acid chain: Adenine phosphoribosyltransferase (181 aa).

It belongs to the purine/pyrimidine phosphoribosyltransferase family. As to quaternary structure, homodimer.

The protein resides in the cytoplasm. It carries out the reaction AMP + diphosphate = 5-phospho-alpha-D-ribose 1-diphosphate + adenine. Its pathway is purine metabolism; AMP biosynthesis via salvage pathway; AMP from adenine: step 1/1. Its function is as follows. Catalyzes a salvage reaction resulting in the formation of AMP, that is energically less costly than de novo synthesis. The protein is Adenine phosphoribosyltransferase of Brucella suis (strain ATCC 23445 / NCTC 10510).